We begin with the raw amino-acid sequence, 358 residues long: Chorismate synthase (358 aa).

Residue R46 coordinates NADP(+). FMN-binding positions include 123-125, 235-236, G275, 290-294, and R316; these read RSS, NA, and KATPS.

It belongs to the chorismate synthase family. As to quaternary structure, homotetramer. Requires FMNH2 as cofactor.

It catalyses the reaction 5-O-(1-carboxyvinyl)-3-phosphoshikimate = chorismate + phosphate. Its pathway is metabolic intermediate biosynthesis; chorismate biosynthesis; chorismate from D-erythrose 4-phosphate and phosphoenolpyruvate: step 7/7. Its function is as follows. Catalyzes the anti-1,4-elimination of the C-3 phosphate and the C-6 proR hydrogen from 5-enolpyruvylshikimate-3-phosphate (EPSP) to yield chorismate, which is the branch point compound that serves as the starting substrate for the three terminal pathways of aromatic amino acid biosynthesis. This reaction introduces a second double bond into the aromatic ring system. The protein is Chorismate synthase of Aliarcobacter butzleri (strain RM4018) (Arcobacter butzleri).